The sequence spans 805 residues: Phenylalanine--tRNA ligase beta subunit (805 aa).

A tRNA-binding domain is found at 39–148 (APPFTGVVVA…AALRPGTDIR (110 aa)). Positions 399-474 (PVREPVRMRL…RVYGFERIPD (76 aa)) constitute a B5 domain. Positions 452, 458, 461, and 462 each coordinate Mg(2+). An FDX-ACB domain is found at 703–804 (SRQPAVVRDL…LVAAHNARQR (102 aa)).

Belongs to the phenylalanyl-tRNA synthetase beta subunit family. Type 1 subfamily. As to quaternary structure, tetramer of two alpha and two beta subunits. The cofactor is Mg(2+).

Its subcellular location is the cytoplasm. The enzyme catalyses tRNA(Phe) + L-phenylalanine + ATP = L-phenylalanyl-tRNA(Phe) + AMP + diphosphate + H(+). The protein is Phenylalanine--tRNA ligase beta subunit of Bordetella parapertussis (strain 12822 / ATCC BAA-587 / NCTC 13253).